Here is a 63-residue protein sequence, read N- to C-terminus: Large ribosomal subunit protein bL35 (63 aa).

The disordered stretch occupies residues 26–50 (GSGMRHNLEHKSARKRRALKRDDVL).

It belongs to the bacterial ribosomal protein bL35 family.

This Bifidobacterium animalis subsp. lactis (strain AD011) protein is Large ribosomal subunit protein bL35.